The primary structure comprises 74 residues: High-potential iron-sulfur protein (74 aa).

Positions 36, 39, 53, and 67 each coordinate [4Fe-4S] cluster.

Belongs to the high-potential iron-sulfur protein (HiPIP) family. As to quaternary structure, homodimer.

Functionally, specific class of high-redox-potential 4Fe-4S ferredoxins. Functions in anaerobic electron transport in most purple and in some other photosynthetic bacteria and in at least one genus (Paracoccus) of halophilic, denitrifying bacteria. This chain is High-potential iron-sulfur protein (hip), found in Rubrivivax gelatinosus (Rhodocyclus gelatinosus).